Reading from the N-terminus, the 139-residue chain is Spermatogenesis-associated protein 33 (139 aa).

The tract at residues 1–67 (MVTHAAGART…TAKHPPPAAS (67 aa)) is interaction with ATG16L1. The segment at 1-83 (MVTHAAGART…VKQKSSRKKV (83 aa)) is disordered. Positions 25–50 (KSKEKLMEKHSQEARQADRESEKPVD) are enriched in basic and acidic residues. Residues 68–139 (LEEKPDVKQK…ADAYNSHLKE (72 aa)) are interaction with VDAC2. The PQIIIT motif lies at 86–91 (PQIIIT). The residue at position 94 (S94) is a Phosphoserine. Over residues 97–109 (TLVSCSSSGSDQQ) the composition is skewed to polar residues. The disordered stretch occupies residues 97 to 139 (TLVSCSSSGSDQQRTIREPEDWGPYRRHRNPSTADAYNSHLKE). A compositionally biased stretch (basic and acidic residues) spans 110-120 (RTIREPEDWGP).

Interacts (via PQIIIT motif) with PPP3R1, PPP3R2, PPP3CA, PPP3CB and PPP3CC. Interacts with VDAC2. Interacts with ATG16L1 (via WD repeats).

The protein localises to the cytoplasm. It is found in the cytosol. Its subcellular location is the nucleus. It localises to the mitochondrion. Its function is as follows. Plays an important role in sperm motility and male fertility. Required for sperm midpiece flexibility and for the localization of sperm calcineurin to the mitochondria. Promotes mitophagy as well as acts as an autophagy mediator in male germline cells. Links damaged mitochondria to autophagosomes via its binding to the outer mitochondrial membrane protein VDAC2, as well as to key autophagy machinery component ATG16L1. The chain is Spermatogenesis-associated protein 33 (SPATA33) from Homo sapiens (Human).